A 381-amino-acid polypeptide reads, in one-letter code: GDP-mannose-dependent monoacylated alpha-(1-6)-phosphatidylinositol monomannoside mannosyltransferase (381 aa).

Residues R206, K211, L261, and E298 each coordinate GDP-alpha-D-mannose.

Belongs to the glycosyltransferase group 1 family. Glycosyltransferase 4 subfamily.

The catalysed reaction is a 1,2-diacyl-sn-glycero-3-phospho-[alpha-D-mannopyranosyl-(1&lt;-&gt;6)-D-myo-inositol] + GDP-alpha-D-mannose = a 2,6-O-bis(alpha-D-mannopyranosyl)-1-phosphatidyl-1D-myo-inositol + GDP + H(+). The enzyme catalyses a 1,2-diacyl-sn-glycero-3-phospho-[alpha-D-6-acyl-mannopyranosyl-(1&lt;-&gt;6)-D-myo-inositol] + GDP-alpha-D-mannose = a 2-O-(alpha-D-mannosyl)-6-O-(6-O-acyl-alpha-D-mannosyl)-1-phosphatidyl-1D-myo-inositol + GDP + H(+). It functions in the pathway phospholipid metabolism; phosphatidylinositol metabolism. Involved in the biosynthesis of phosphatidyl-myo-inositol mannosides (PIM) which are early precursors in the biosynthesis of lipomannans (LM) and lipoarabinomannans (LAM). Catalyzes the addition of a mannosyl residue from GDP-D-mannose (GDP-Man) to the position 6 of a phosphatidyl-myo-inositol bearing an alpha-1,2-linked mannose residue (PIM1) to generate phosphatidyl-myo-inositol bearing alpha-1,2- and alpha-1,6-linked mannose residues (Ac1PIM2). PimB also catalyzes the addition of a mannosyl residue from GDP-Man to the position 6 of phosphatidyl-myo-inositol bearing an acylated alpha-1,2-linked mannose residue (Ac1PIM1) to generate monoacylated phosphatidyl-myo-inositol bearing alpha-1,2- and alpha-1,6-linked mannose residues (Ac1PIM2). The addition of the second mannosyl residue by PimB preferentially occurs before the acylation of the mannosyl residue transferred by PimA. Also able to transfer a mannosyl residue from GDP-Man to the position 6 of a phosphatidyl-myo-inositol (PI), but this reaction is very slow. This Corynebacterium glutamicum (strain ATCC 13032 / DSM 20300 / JCM 1318 / BCRC 11384 / CCUG 27702 / LMG 3730 / NBRC 12168 / NCIMB 10025 / NRRL B-2784 / 534) protein is GDP-mannose-dependent monoacylated alpha-(1-6)-phosphatidylinositol monomannoside mannosyltransferase.